The following is a 311-amino-acid chain: Cell division control protein 2 homolog 3 (311 aa).

The 284-residue stretch at 23-306 folds into the Protein kinase domain; the sequence is YNRMDILGEG…AKAALQHPWF (284 aa). ATP contacts are provided by residues 29–37 and K52; that span reads LGEGTYGVV. T33 is modified (phosphothreonine). A Phosphotyrosine modification is found at Y34. D145 acts as the Proton acceptor in catalysis.

Belongs to the protein kinase superfamily. CMGC Ser/Thr protein kinase family. CDC2/CDKX subfamily. Forms a stable but non-covalent complex with a regulatory subunit and with a cyclin.

It carries out the reaction L-seryl-[protein] + ATP = O-phospho-L-seryl-[protein] + ADP + H(+). The catalysed reaction is L-threonyl-[protein] + ATP = O-phospho-L-threonyl-[protein] + ADP + H(+). Its activity is regulated as follows. Phosphorylation at Thr-33 or Tyr-34 inactivates the enzyme. Probably involved in the control of the cell cycle. The sequence is that of Cell division control protein 2 homolog 3 (CRK3) from Trypanosoma brucei brucei.